Here is a 307-residue protein sequence, read N- to C-terminus: Serine/threonine-protein phosphatase 4 catalytic subunit (307 aa).

The residue at position 2 (A2) is an N-acetylalanine. Positions 54, 56, 82, and 114 each coordinate Mn(2+). The active-site Proton donor is the H115. Mn(2+) contacts are provided by H164 and H238. L307 is modified (leucine methyl ester).

It belongs to the PPP phosphatase family. PP-4 (PP-X) subfamily. In terms of assembly, serine/threonine-protein phosphatase 4 (PP4) occurs in different assemblies of the catalytic and one or more regulatory subunits. Component of the PP4 complexes PPP4C-PPP4R1, PPP4C-PPP4R2, PPP4C-PPP4R2-PPP4R3A, PPP4C-PPP4R2-PPP4R3B and PPP4C-PPP4R4. The PPP4C-PPP4R2 complex appears to be a tetramer composed of 2 molecules of PPP4C and 2 molecules of PPP4R2. Interacts with REL, NFKB1/p50 and RELA. Interacts with SMN1 and GEMIN4. Interacts with IRS4 (phosphorylated). Interacts with SMEK1/PPP4R3A; the interaction requires PP4R2. Interacts with HDAC3. Mn(2+) serves as cofactor. Methylation at the C-terminal Leu-307 is critical for interactions with regulatory subunits and functions in DNA repair.

Its subcellular location is the cytoplasm. It is found in the nucleus. It localises to the cytoskeleton. The protein localises to the microtubule organizing center. The protein resides in the centrosome. The enzyme catalyses O-phospho-L-seryl-[protein] + H2O = L-seryl-[protein] + phosphate. The catalysed reaction is O-phospho-L-threonyl-[protein] + H2O = L-threonyl-[protein] + phosphate. In terms of biological role, protein phosphatase that is involved in many processes such as microtubule organization at centrosomes, maturation of spliceosomal snRNPs, apoptosis, DNA repair, tumor necrosis factor (TNF)-alpha signaling, activation of c-Jun N-terminal kinase MAPK8, regulation of histone acetylation, DNA damage checkpoint signaling, NF-kappa-B activation and cell migration. The PPP4C-PPP4R1 PP4 complex may play a role in dephosphorylation and regulation of HDAC3. The PPP4C-PPP4R2-PPP4R3A PP4 complex specifically dephosphorylates H2AX phosphorylated on Ser-140 (gamma-H2AX) generated during DNA replication and required for DNA DSB repair. Dephosphorylates NDEL1 at CDK1 phosphorylation sites and negatively regulates CDK1 activity in interphase. In response to DNA damage, catalyzes RPA2 dephosphorylation, an essential step for DNA repair since it allows the efficient RPA2-mediated recruitment of RAD51 to chromatin. The sequence is that of Serine/threonine-protein phosphatase 4 catalytic subunit (Ppp4c) from Rattus norvegicus (Rat).